A 106-amino-acid chain; its full sequence is Cell cycle protein GpsB (106 aa).

Residues 34-67 (LDVIIQDYDNFKQEIDRLKAENEKLKKSTPAVEQ) are a coiled coil. The interval 55–83 (NEKLKKSTPAVEQSRSRSQQPPTSQVNYD) is disordered. Residues 70–79 (SRSQQPPTSQ) show a composition bias toward low complexity.

The protein belongs to the GpsB family. As to quaternary structure, forms polymers through the coiled coil domains. Interacts with PBP1, MreC and EzrA.

The protein resides in the cytoplasm. Its function is as follows. Divisome component that associates with the complex late in its assembly, after the Z-ring is formed, and is dependent on DivIC and PBP2B for its recruitment to the divisome. Together with EzrA, is a key component of the system that regulates PBP1 localization during cell cycle progression. Its main role could be the removal of PBP1 from the cell pole after pole maturation is completed. Also contributes to the recruitment of PBP1 to the division complex. Not essential for septum formation. The chain is Cell cycle protein GpsB from Oceanobacillus iheyensis (strain DSM 14371 / CIP 107618 / JCM 11309 / KCTC 3954 / HTE831).